The sequence spans 122 residues: Large ribosomal subunit protein uL14 (122 aa).

It belongs to the universal ribosomal protein uL14 family. As to quaternary structure, part of the 50S ribosomal subunit. Forms a cluster with proteins L3 and L19. In the 70S ribosome, L14 and L19 interact and together make contacts with the 16S rRNA in bridges B5 and B8.

Binds to 23S rRNA. Forms part of two intersubunit bridges in the 70S ribosome. This Mycobacteroides abscessus (strain ATCC 19977 / DSM 44196 / CCUG 20993 / CIP 104536 / JCM 13569 / NCTC 13031 / TMC 1543 / L948) (Mycobacterium abscessus) protein is Large ribosomal subunit protein uL14.